A 374-amino-acid chain; its full sequence is Deoxyguanosinetriphosphate triphosphohydrolase-like protein (374 aa).

An HD domain is found at 65 to 196; that stretch reads RLTHSLEVAQ…ANLADEIAYN (132 aa).

It belongs to the dGTPase family. Type 2 subfamily.

The sequence is that of Deoxyguanosinetriphosphate triphosphohydrolase-like protein (dgt) from Nitrosomonas europaea (strain ATCC 19718 / CIP 103999 / KCTC 2705 / NBRC 14298).